The chain runs to 357 residues: DNA primase small subunit PriS (357 aa).

Catalysis depends on residues aspartate 105, aspartate 107, and aspartate 259.

This sequence belongs to the eukaryotic-type primase small subunit family. As to quaternary structure, heterodimer of a small subunit (PriS) and a large subunit (PriL). Requires Mg(2+) as cofactor. The cofactor is Mn(2+).

Functionally, catalytic subunit of DNA primase, an RNA polymerase that catalyzes the synthesis of short RNA molecules used as primers for DNA polymerase during DNA replication. The small subunit contains the primase catalytic core and has DNA synthesis activity on its own. Binding to the large subunit stabilizes and modulates the activity, increasing the rate of DNA synthesis while decreasing the length of the DNA fragments, and conferring RNA synthesis capability. The DNA polymerase activity may enable DNA primase to also catalyze primer extension after primer synthesis. May also play a role in DNA repair. This is DNA primase small subunit PriS from Methanococcus maripaludis (strain DSM 14266 / JCM 13030 / NBRC 101832 / S2 / LL).